Consider the following 230-residue polypeptide: Heptaprenylglyceryl phosphate synthase (230 aa).

K12 lines the sn-glycerol 1-phosphate pocket. Mg(2+)-binding residues include D14 and T40. Sn-glycerol 1-phosphate-binding positions include 159–164 (YIEYSG), G189, and 209–210 (GD).

It belongs to the GGGP/HepGP synthase family. Group I subfamily. Homodimer. Requires Mg(2+) as cofactor.

It catalyses the reaction sn-glycerol 1-phosphate + all-trans-heptaprenyl diphosphate = 3-heptaprenyl-sn-glycero-1-phosphate + diphosphate. Its pathway is membrane lipid metabolism; glycerophospholipid metabolism. Its function is as follows. Prenyltransferase that catalyzes in vivo the transfer of the heptaprenyl moiety of heptaprenyl pyrophosphate (HepPP; 35 carbon atoms) to the C3 hydroxyl of sn-glycerol-1-phosphate (G1P), producing heptaprenylglyceryl phosphate (HepGP). This reaction is an ether-bond-formation step in the biosynthesis of archaea-type G1P-based membrane lipids found in Bacillales. The chain is Heptaprenylglyceryl phosphate synthase from Staphylococcus aureus (strain MRSA252).